A 686-amino-acid chain; its full sequence is Methionine--tRNA ligase (686 aa).

Positions 15–25 (PYANGPIHLGH) match the 'HIGH' region motif. Zn(2+)-binding residues include Cys-146, Cys-149, Cys-159, and Cys-162. The short motif at 332–336 (KMSKS) is the 'KMSKS' region element. Lys-335 contacts ATP. The 102-residue stretch at 585 to 686 (TFAKTDLRVA…DGAKPGQRIM (102 aa)) folds into the tRNA-binding domain.

Belongs to the class-I aminoacyl-tRNA synthetase family. MetG type 1 subfamily. Homodimer. The cofactor is Zn(2+).

The protein resides in the cytoplasm. The catalysed reaction is tRNA(Met) + L-methionine + ATP = L-methionyl-tRNA(Met) + AMP + diphosphate. Is required not only for elongation of protein synthesis but also for the initiation of all mRNA translation through initiator tRNA(fMet) aminoacylation. The chain is Methionine--tRNA ligase from Psychromonas ingrahamii (strain DSM 17664 / CCUG 51855 / 37).